A 498-amino-acid polypeptide reads, in one-letter code: Ammonium transporter 1 member 3 (498 aa).

The next 11 membrane-spanning stretches (helical) occupy residues 41–61 (LLFS…LCAG), 76–96 (VLDA…FAFG), 122–142 (FFLF…GSIA), 150–170 (YLIY…HWFW), 194–214 (FAGS…GAFI), 238–258 (LVVL…PGSF), 277–299 (AVGR…TLYG), 307–327 (WNVT…TAGC), 329–349 (VVDP…LIGC), 362–382 (LEAT…TALF), and 414–434 (IVQI…LFYV). Residues 473–498 (RAKSAAETARVEPRKSPEQAAAGQFV) are disordered.

This sequence belongs to the ammonia transporter channel (TC 1.A.11.2) family. Expressed in roots.

It localises to the membrane. Its function is as follows. Ammonium transporter probably involved in ammonium uptake from the soil. This Oryza sativa subsp. japonica (Rice) protein is Ammonium transporter 1 member 3 (AMT1-3).